Here is a 182-residue protein sequence, read N- to C-terminus: MIRALCTIVLIAAGVAVALYLSLVYGYYMSVGVQDASWLTALTGNRPDAKVPFFDKAVGEAPEDKVAYTERPYPVSSTQSPTTTQSPTTTTLKPTTMAVLASIGATPTPVVCHNVRGDMQGIACNVVMKKTVAAALKVQPEAKKDNVNAQYRYGMWTPLRRSRSPFGVWNIPKKLAIAAPDV.

An N-terminal signal peptide occupies residues 1-26 (MIRALCTIVLIAAGVAVALYLSLVYG). The segment at 68-90 (YTERPYPVSSTQSPTTTQSPTTT) is disordered. Positions 74 to 90 (PVSSTQSPTTTQSPTTT) are enriched in low complexity.

This is an uncharacterized protein from Dryophytes versicolor (chameleon treefrog).